Here is a 581-residue protein sequence, read N- to C-terminus: 4-hydroxy-3-methylbut-2-en-1-yl diphosphate synthase (flavodoxin) (581 aa).

4 residues coordinate [4Fe-4S] cluster: Cys489, Cys492, Cys523, and Glu530.

Belongs to the IspG family. [4Fe-4S] cluster is required as a cofactor.

It catalyses the reaction (2E)-4-hydroxy-3-methylbut-2-enyl diphosphate + oxidized [flavodoxin] + H2O + 2 H(+) = 2-C-methyl-D-erythritol 2,4-cyclic diphosphate + reduced [flavodoxin]. The protein operates within isoprenoid biosynthesis; isopentenyl diphosphate biosynthesis via DXP pathway; isopentenyl diphosphate from 1-deoxy-D-xylulose 5-phosphate: step 5/6. Functionally, converts 2C-methyl-D-erythritol 2,4-cyclodiphosphate (ME-2,4cPP) into 1-hydroxy-2-methyl-2-(E)-butenyl 4-diphosphate. The sequence is that of 4-hydroxy-3-methylbut-2-en-1-yl diphosphate synthase (flavodoxin) from Porphyromonas gingivalis (strain ATCC BAA-308 / W83).